The chain runs to 129 residues: C-phycocyanin beta subunit (129 aa).

N4-methylasparagine is present on asparagine 62. Residue cysteine 116 coordinates (2R,3E)-phycocyanobilin.

It belongs to the phycobiliprotein family. Heterodimer of an alpha and a beta subunit, which further assembles into trimers and the trimers into hexamers. Two isomers exist. In terms of processing, contains two covalently linked bilin chromophores.

It is found in the cellular thylakoid membrane. Its function is as follows. Light-harvesting photosynthetic bile pigment-protein from the phycobiliprotein complex (phycobilisome, PBS). Phycocyanin is the major phycobiliprotein in the PBS rod. The sequence is that of C-phycocyanin beta subunit from Aphanizomenon flos-aquae.